A 156-amino-acid polypeptide reads, in one-letter code: Protein FAM162A (156 aa).

Residues 37–57 (TNGFCSKPQESPKPPDQHTYS) are disordered. The tract at residues 78-104 (RFKKEDEIPETVSFEMLDAAKNKVRVK) is required for proapoptotic activity. Residues 105–122 (ISYVMIALTVAGCVLMVI) form a helical membrane-spanning segment.

It belongs to the UPF0389 family. Interacts with HSP90AB1; HSP90AB1 is essential for FAM162A mitochondrial localization and pro-apoptotic activity. Interacts with VDAC2; the interaction is probably involved in inducing mitochondrial permeability transition.

The protein resides in the mitochondrion membrane. Functionally, proposed to be involved in regulation of apoptosis; the exact mechanism may differ between cell types/tissues. May be involved in hypoxia-induced cell death of transformed cells implicating cytochrome C release and caspase activation (such as CASP9) and inducing mitochondrial permeability transition. May be involved in hypoxia-induced cell death of neuronal cells probably by promoting release of AIFM1 from mitochondria to cytoplasm and its translocation to the nucleus; however, the involvement of caspases has been reported conflictingly. This chain is Protein FAM162A (FAM162A), found in Bos taurus (Bovine).